A 1679-amino-acid polypeptide reads, in one-letter code: Maestro heat-like repeat-containing protein family member 2A (1679 aa).

HEAT repeat units follow at residues 68 to 91 (ATTD…ISTQ), 92 to 128 (RKMN…QMRD), 190 to 229 (MPYM…TVQF), 293 to 313 (EQVY…GHWP), 314 to 350 (LFPS…ELHV), 380 to 417 (SYPK…ADDP), 422 to 459 (KTIY…SGFQ), 571 to 610 (PAPQ…SIAP), 614 to 654 (DMWE…SLKK), 737 to 774 (KTVL…ETVK), 848 to 887 (SALT…MKPF), 991 to 1028 (GQFG…LHVS), 1219 to 1261 (DPLM…SHGP), 1387 to 1425 (KLLR…GAPR), and 1632 to 1669 (MDLV…CNQH).

This chain is Maestro heat-like repeat-containing protein family member 2A (Mroh2a), found in Mus musculus (Mouse).